The sequence spans 376 residues: Probable sister chromatid cohesion protein DCC1 (376 aa).

Positions 213-232 (QKSPTNSGGGGEEIKGGGGD) are disordered. Gly residues predominate over residues 219 to 232 (SGGGGEEIKGGGGD).

This sequence belongs to the DCC1 family.

It is found in the nucleus. In terms of biological role, loads PCNA onto primed templates regulating velocity, spacing and restart activity of replication forks. May couple DNA replication to sister chromatid cohesion. This Dictyostelium discoideum (Social amoeba) protein is Probable sister chromatid cohesion protein DCC1.